Reading from the N-terminus, the 335-residue chain is Holliday junction branch migration complex subunit RuvB (335 aa).

Residues 1 to 183 (MDERIISSET…FGVIDHLEFY (183 aa)) are large ATPase domain (RuvB-L). Residues leucine 22, arginine 23, glycine 64, lysine 67, threonine 68, threonine 69, 130–132 (EDY), arginine 173, tyrosine 183, and arginine 220 contribute to the ATP site. Threonine 68 provides a ligand contact to Mg(2+). Positions 184–254 (TEEQLTEIVL…LAKEALTLLQ (71 aa)) are small ATPAse domain (RuvB-S). Residues 257 to 335 (PRGLDTIDQK…HLGISYEKEV (79 aa)) form a head domain (RuvB-H) region. Residues arginine 293, arginine 312, and arginine 317 each coordinate DNA.

This sequence belongs to the RuvB family. In terms of assembly, homohexamer. Forms an RuvA(8)-RuvB(12)-Holliday junction (HJ) complex. HJ DNA is sandwiched between 2 RuvA tetramers; dsDNA enters through RuvA and exits via RuvB. An RuvB hexamer assembles on each DNA strand where it exits the tetramer. Each RuvB hexamer is contacted by two RuvA subunits (via domain III) on 2 adjacent RuvB subunits; this complex drives branch migration. In the full resolvosome a probable DNA-RuvA(4)-RuvB(12)-RuvC(2) complex forms which resolves the HJ.

It localises to the cytoplasm. The enzyme catalyses ATP + H2O = ADP + phosphate + H(+). Functionally, the RuvA-RuvB-RuvC complex processes Holliday junction (HJ) DNA during genetic recombination and DNA repair, while the RuvA-RuvB complex plays an important role in the rescue of blocked DNA replication forks via replication fork reversal (RFR). RuvA specifically binds to HJ cruciform DNA, conferring on it an open structure. The RuvB hexamer acts as an ATP-dependent pump, pulling dsDNA into and through the RuvAB complex. RuvB forms 2 homohexamers on either side of HJ DNA bound by 1 or 2 RuvA tetramers; 4 subunits per hexamer contact DNA at a time. Coordinated motions by a converter formed by DNA-disengaged RuvB subunits stimulates ATP hydrolysis and nucleotide exchange. Immobilization of the converter enables RuvB to convert the ATP-contained energy into a lever motion, pulling 2 nucleotides of DNA out of the RuvA tetramer per ATP hydrolyzed, thus driving DNA branch migration. The RuvB motors rotate together with the DNA substrate, which together with the progressing nucleotide cycle form the mechanistic basis for DNA recombination by continuous HJ branch migration. Branch migration allows RuvC to scan DNA until it finds its consensus sequence, where it cleaves and resolves cruciform DNA. In Listeria innocua serovar 6a (strain ATCC BAA-680 / CLIP 11262), this protein is Holliday junction branch migration complex subunit RuvB.